We begin with the raw amino-acid sequence, 172 residues long: Large ribosomal subunit protein uL10 (172 aa).

Belongs to the universal ribosomal protein uL10 family. Part of the ribosomal stalk of the 50S ribosomal subunit. The N-terminus interacts with L11 and the large rRNA to form the base of the stalk. The C-terminus forms an elongated spine to which L12 dimers bind in a sequential fashion forming a multimeric L10(L12)X complex.

Its function is as follows. Forms part of the ribosomal stalk, playing a central role in the interaction of the ribosome with GTP-bound translation factors. The chain is Large ribosomal subunit protein uL10 from Francisella tularensis subsp. mediasiatica (strain FSC147).